The sequence spans 281 residues: Large ribosomal subunit protein uL2 (281 aa).

Residues 208-281 (AGRSRYAGQR…RGRKRGPHTR (74 aa)) form a disordered region. Residues 254–281 (TVGKKTRSHKARSNKFIVRGRKRGPHTR) show a composition bias toward basic residues.

This sequence belongs to the universal ribosomal protein uL2 family. In terms of assembly, part of the 50S ribosomal subunit. Forms a bridge to the 30S subunit in the 70S ribosome.

In terms of biological role, one of the primary rRNA binding proteins. Required for association of the 30S and 50S subunits to form the 70S ribosome, for tRNA binding and peptide bond formation. It has been suggested to have peptidyltransferase activity; this is somewhat controversial. Makes several contacts with the 16S rRNA in the 70S ribosome. In Limosilactobacillus fermentum (strain NBRC 3956 / LMG 18251) (Lactobacillus fermentum), this protein is Large ribosomal subunit protein uL2.